The primary structure comprises 234 residues: NLP effector protein 10 (234 aa).

An N-terminal signal peptide occupies residues 1–17 (MFKTFIIAAVAVATVRA). N-linked (GlcNAc...) asparagine glycosylation is present at Asn-65. The Conserved undecapeptide motif I signature appears at 101–111 (AIMYSWYFPKD). Positions 118–124 (GHRHDWE) match the Hepta-peptide GHRHDWE motif II motif.

The protein belongs to the Necrosis inducing protein (NPP1) family.

The protein localises to the secreted. Secreted effector that contributes moderately to virulence during infection by P.capsici. Does not cause visible reaction of C.annuum for several days after inoculation, but by 7 days after inoculation, small necrotic lesions become visible. Leads only to chlorotic areas, without necrosis at 7 days after non-host N.benthamiana leaves infection. In Phytophthora capsici, this protein is NLP effector protein 10.